A 201-amino-acid chain; its full sequence is Small ribosomal subunit protein uS4c (201 aa).

The interval 15–43 (LGALPGLTNKRPRAGSDLRNQSRSGKRSQ) is disordered. An S4 RNA-binding domain is found at 89-149 (MRLDNILFRL…DEQKSIALIQ (61 aa)).

In terms of assembly, component of the chloroplast small ribosomal subunit (SSU). Mature 70S chloroplast ribosomes of higher plants consist of a small (30S) and a large (50S) subunit. The 30S small subunit contains 1 molecule of ribosomal RNA (16S rRNA) and 24 different proteins. The 50S large subunit contains 3 rRNA molecules (23S, 5S and 4.5S rRNA) and 33 different proteins.

It localises to the plastid. The protein resides in the chloroplast. In terms of biological role, component of the chloroplast ribosome (chloro-ribosome), a dedicated translation machinery responsible for the synthesis of chloroplast genome-encoded proteins, including proteins of the transcription and translation machinery and components of the photosynthetic apparatus. The sequence is that of Small ribosomal subunit protein uS4c (rps4) from Spinacia oleracea (Spinach).